The following is a 352-amino-acid chain: MKPALLEVMRMNRICRMVLATCLGSFILVIFYFQSMLHPVMRRNPFGVDICCRKGSRSPLQELYNPIQLELSNTAILHQMRRDQVTDTCRANSAMSRKRRVLTPNDLKHLVVDEDHELIYCYVPKVACTNWKRLMMVLSGRGKYSDPMEIPANEAHVSANLKTLNQYSIPEINHRLKSYMKFLFVREPFERLVSAYRNKFTQKYNTSFHKRYGTKIIRRQRKNATQEALRKGDDVKFEEFVAYLIDPHTQREEPFNEHWQTVYSLCHPCHIHYDLVGKYETLEEDSNYVLRLAGVSGYLKFPTYAKSTRTTDEMTTEFFQNISAEHQTQLYEVYKLDFLMFNYSVPNYLKLD.

The Cytoplasmic segment spans residues 1 to 16 (MKPALLEVMRMNRICR). Residues 17–37 (MVLATCLGSFILVIFYFQSML) traverse the membrane as a helical; Signal-anchor for type II membrane protein segment. The Lumenal segment spans residues 38–352 (HPVMRRNPFG…YSVPNYLKLD (315 aa)). Residues 124-130 (PKVACTN) and 186-194 (REPFERLVS) contribute to the 3'-phosphoadenylyl sulfate site. Asn205, Asn223, Asn321, and Asn342 each carry an N-linked (GlcNAc...) asparagine glycan.

This sequence belongs to the sulfotransferase 2 family. Post-translationally, N-glycosylated; required for activity and stability.

The protein resides in the golgi apparatus membrane. The enzyme catalyses chondroitin beta-D-glucuronate + n 3'-phosphoadenylyl sulfate = chondroitin 4'-sulfate + n adenosine 3',5'-bisphosphate + n H(+). Catalyzes the transfer of sulfate to position 4 of the N-acetylgalactosamine (GalNAc) residue of chondroitin. Chondroitin sulfate constitutes the predominant proteoglycan present in cartilage and is distributed on the surfaces of many cells and extracellular matrices. Can also sulfate Gal residues in desulfated dermatan sulfate. Preferentially sulfates in GlcA-&gt;GalNAc unit than in IdoA-&gt;GalNAc unit. Does not form 4, 6-di-O-sulfated GalNAc when chondroitin sulfate C is used as an acceptor. In Rattus norvegicus (Rat), this protein is Carbohydrate sulfotransferase 11 (Chst11).